Consider the following 72-residue polypeptide: Large ribosomal subunit protein bL31 (72 aa).

It belongs to the bacterial ribosomal protein bL31 family. Type A subfamily. Part of the 50S ribosomal subunit.

Its function is as follows. Binds the 23S rRNA. The chain is Large ribosomal subunit protein bL31 from Deinococcus geothermalis (strain DSM 11300 / CIP 105573 / AG-3a).